The sequence spans 400 residues: NADH-quinone oxidoreductase subunit D (400 aa).

This sequence belongs to the complex I 49 kDa subunit family. In terms of assembly, NDH-1 is composed of 14 different subunits. Subunits NuoB, C, D, E, F, and G constitute the peripheral sector of the complex.

It is found in the cell inner membrane. The enzyme catalyses a quinone + NADH + 5 H(+)(in) = a quinol + NAD(+) + 4 H(+)(out). NDH-1 shuttles electrons from NADH, via FMN and iron-sulfur (Fe-S) centers, to quinones in the respiratory chain. The immediate electron acceptor for the enzyme in this species is believed to be menaquinone. Couples the redox reaction to proton translocation (for every two electrons transferred, four hydrogen ions are translocated across the cytoplasmic membrane), and thus conserves the redox energy in a proton gradient. The protein is NADH-quinone oxidoreductase subunit D of Prosthecochloris aestuarii (strain DSM 271 / SK 413).